Here is a 148-residue protein sequence, read N- to C-terminus: U5-hexatoxin-Hi1a (148 aa).

The N-terminal stretch at 1–21 (MNFSVVAVALVVVLTVHFTDG) is a signal peptide. The propeptide occupies 22–38 (QETSSSLPSPPSPLPGR). The interval 125–148 (TPSTTVTTPTPTTETPTTETPSTP) is disordered.

In terms of processing, contains 2 disulfide bonds. As to expression, expressed by the venom gland.

Its subcellular location is the secreted. Functionally, probable ion channel inhibitor. In Hadronyche infensa (Fraser island funnel-web spider), this protein is U5-hexatoxin-Hi1a.